A 306-amino-acid chain; its full sequence is Glutathione transport system permease protein GsiC (306 aa).

The Cytoplasmic segment spans residues 1 to 8; the sequence is MLNYVLKR. Residues 9-29 form a helical membrane-spanning segment; the sequence is LLGLIPTLLIVAVLVFLFVHL. The Periplasmic segment spans residues 30 to 102; it reads LPGDPARLIA…SRFLPTLWLT (73 aa). Residues 95 to 292 form the ABC transmembrane type-1 domain; sequence FLPTLWLTIT…LEFILINLVV (198 aa). Residues 103–123 form a helical membrane-spanning segment; sequence ITSMIWAVLFGMAIGIAAAVW. Residues 124-134 are Cytoplasmic-facing; it reads RNRWPDRLGMT. A helical membrane pass occupies residues 135–155; sequence LAVTGISFPAFALGMLLMQIF. At 156 to 168 the chain is on the periplasmic side; the sequence is SVDLGWLPTVGAD. The chain crosses the membrane as a helical span at residues 169–189; it reads SWQHYILPSLTLGAAVASVMA. The Cytoplasmic portion of the chain corresponds to 190–228; it reads RFTRSSFVDVLSEDYMRTARAKGVSETWVVLKHGLRNAM. A helical membrane pass occupies residues 229 to 249; it reads IPVVTMMGLQFGFLLGGSIVV. Residues 250 to 278 lie on the Periplasmic side of the membrane; that stretch reads EKVFNWPGLGRLLVDSVDMRDYPVIQAEV. A helical transmembrane segment spans residues 279–299; sequence LLFSLEFILINLVVDVLYAAI. Topologically, residues 300-306 are cytoplasmic; it reads NPAIRYK.

This sequence belongs to the binding-protein-dependent transport system permease family. In terms of assembly, the complex is composed of two ATP-binding proteins (GsiA), two transmembrane proteins (GsiC and GsiD) and a solute-binding protein (GsiB).

The protein resides in the cell inner membrane. Part of the ABC transporter complex GsiABCD involved in glutathione import. Probably responsible for the translocation of the substrate across the membrane. This is Glutathione transport system permease protein GsiC from Salmonella paratyphi A (strain ATCC 9150 / SARB42).